The following is a 102-amino-acid chain: Vacuolar ATPase assembly integral membrane protein VMA21 homolog (102 aa).

The Cytoplasmic portion of the chain corresponds to 1-33 (MTTSSSSEPSTMATLFPNFRDQEVQSAVKNLLT). The chain crosses the membrane as a helical span at residues 34–54 (YSLVILIVPLASMFLLKQFFF). The Lumenal portion of the chain corresponds to 55-67 (EGLLGVSANDALT). The chain crosses the membrane as a helical span at residues 68 to 88 (YSAIIAVVLVHVVLGIWLFAA). Over 89–102 (TKQEDRKKRENKQD) the chain is Cytoplasmic.

This sequence belongs to the VMA21 family.

It localises to the endoplasmic reticulum membrane. It is found in the endoplasmic reticulum-Golgi intermediate compartment membrane. The protein localises to the cytoplasmic vesicle. The protein resides in the COPII-coated vesicle membrane. Functionally, required for the assembly of the V0 complex of the vacuolar ATPase (V-ATPase) in the endoplasmic reticulum. The sequence is that of Vacuolar ATPase assembly integral membrane protein VMA21 homolog from Caenorhabditis elegans.